The primary structure comprises 219 residues: Small ribosomal subunit protein uS3c (219 aa).

The 72-residue stretch at 47–118 (IKKNIRISSG…KINIAITRIT (72 aa)) folds into the KH type-2 domain.

Belongs to the universal ribosomal protein uS3 family. Part of the 30S ribosomal subunit.

The protein localises to the plastid. It is found in the chloroplast. In Citrus sinensis (Sweet orange), this protein is Small ribosomal subunit protein uS3c (rps3).